The sequence spans 1012 residues: DNA polymerase catalytic subunit (1012 aa).

Positions 1-31 are disordered; sequence MDFFNPFIDPTRGGPRNTVRQPTPSQSPTVP. The segment covering 21–31 has biased composition (low complexity); sequence QPTPSQSPTVP.

This sequence belongs to the DNA polymerase type-B family. As to quaternary structure, forms a complex with the ssDNA-binding protein, the DNA polymerase processivity factor, and the alkaline exonuclease. Interacts with the putative helicase-primase complex subunit; this interaction may coordinate leading and lagging strand DNA synthesis at the replication fork.

It is found in the host nucleus. It catalyses the reaction DNA(n) + a 2'-deoxyribonucleoside 5'-triphosphate = DNA(n+1) + diphosphate. The enzyme catalyses Endonucleolytic cleavage to 5'-phosphomonoester.. Functionally, replicates viral genomic DNA. The replication complex is composed of six viral proteins: the DNA polymerase, processivity factor, primase, primase-associated factor, helicase, and ssDNA-binding protein. Additionally, the polymerase contains an intrinsic ribonuclease H (RNase H) activity that specifically degrades RNA/DNA heteroduplexes or duplex DNA substrates in the 5' to 3' direction. Therefore, it can catalyze the excision of the RNA primers that initiate the synthesis of Okazaki fragments at a replication fork during viral DNA replication. In Human herpesvirus 8 type P (isolate GK18) (HHV-8), this protein is DNA polymerase catalytic subunit (ORF9).